A 157-amino-acid polypeptide reads, in one-letter code: MSRRRRADKREVLPDPKFGDLVVTKFMNYVMYEGKKAVAENIVYGAFDILEARRKDMGPLETFHAALDNVAPAIEVRSRRVGGATYQVPVEVRPERRRALAIRWLVNAARSRGENTMTEKLAGELLDASSNRGSAVKKREDTHKMAEANRAFSHYRW.

This sequence belongs to the universal ribosomal protein uS7 family. As to quaternary structure, part of the 30S ribosomal subunit. Contacts proteins S9 and S11.

Its function is as follows. One of the primary rRNA binding proteins, it binds directly to 16S rRNA where it nucleates assembly of the head domain of the 30S subunit. Is located at the subunit interface close to the decoding center, probably blocks exit of the E-site tRNA. The polypeptide is Small ribosomal subunit protein uS7 (Phenylobacterium zucineum (strain HLK1)).